The chain runs to 1491 residues: CLIP-associating protein (1491 aa).

HEAT repeat units lie at residues 44-82 (CTDM…RLGS), 85-123 (NAYT…HRVL), 163-201 (QLSV…HVGD), and 402-440 (DAFC…YTHA). Disordered stretches follow at residues 537-586 (RERE…AVDT) and 600-739 (LYSR…NNPV). Gly residues predominate over residues 542 to 551 (GGGGGTGTGT). The segment covering 569-580 (GTLQKPTPSMRS) has biased composition (polar residues). 3 positions are modified to phosphoserine: serine 582, serine 626, and serine 634. The segment covering 632–646 (LNSNSGGTPATTPGS) has biased composition (polar residues). Threonine 648 is modified (phosphothreonine). Composition is skewed to polar residues over residues 657-671 (VSQS…SPST) and 699-712 (PRST…SPTR). 5 positions are modified to phosphoserine: serine 806, serine 817, serine 820, serine 822, and serine 824. HEAT repeat units lie at residues 874–912 (QQQL…VHAN) and 955–993 (QLQL…TYCK). Disordered stretches follow at residues 1065 to 1127 (HMRR…SVEQ) and 1167 to 1205 (GHLQ…ESAT). Composition is skewed to low complexity over residues 1070–1097 (SQSC…QSPS), 1111–1124 (LSIS…RQSS), and 1181–1200 (ASLS…QSNT). Phosphoserine occurs at positions 1120, 1123, and 1124. 2 HEAT repeats span residues 1289–1327 (NKHF…SNKM) and 1408–1446 (DAHL…VLGE).

It belongs to the CLASP family. As to quaternary structure, interacts with CLIP-190 and microtubules. Expressed in testis and ovary.

It localises to the cytoplasm. The protein resides in the cytoskeleton. The protein localises to the nucleus. It is found in the microtubule organizing center. Its subcellular location is the centrosome. It localises to the spindle. The protein resides in the cell projection. The protein localises to the growth cone. It is found in the cleavage furrow. Its function is as follows. Microtubule plus-end tracking protein that promotes the stabilization of dynamic microtubules. Required for several aspects of mitotic spindle formation including the formation of the overlapping central spindle microtubules and kinetochore attachment. Required for the incorporation of tubulin subunits at the plus ends of kinetochore microtubules during poleward microtubule flux. Acts antagonistically to Klp10A and Klp67A to maintain metaphase spindle length. Also required for guidance of CNS axons downstream of Abl. May function to identify a subset of microtubules that probe the peripheral growth cone domain, where guidance signals exert their influence on cytoskeletal organization. Also required during oogenesis for the organization of the polarized microtubule network inside the 16-cell cyst that ensures oocyte differentiation. In Drosophila melanogaster (Fruit fly), this protein is CLIP-associating protein (chb).